We begin with the raw amino-acid sequence, 259 residues long: Thiazole synthase (259 aa).

Lys-99 serves as the catalytic Schiff-base intermediate with DXP. 1-deoxy-D-xylulose 5-phosphate is bound by residues Gly-161, 187–188 (AG), and 209–210 (NT).

Belongs to the ThiG family. As to quaternary structure, homotetramer. Forms heterodimers with either ThiH or ThiS.

Its subcellular location is the cytoplasm. The catalysed reaction is [ThiS sulfur-carrier protein]-C-terminal-Gly-aminoethanethioate + 2-iminoacetate + 1-deoxy-D-xylulose 5-phosphate = [ThiS sulfur-carrier protein]-C-terminal Gly-Gly + 2-[(2R,5Z)-2-carboxy-4-methylthiazol-5(2H)-ylidene]ethyl phosphate + 2 H2O + H(+). It functions in the pathway cofactor biosynthesis; thiamine diphosphate biosynthesis. Functionally, catalyzes the rearrangement of 1-deoxy-D-xylulose 5-phosphate (DXP) to produce the thiazole phosphate moiety of thiamine. Sulfur is provided by the thiocarboxylate moiety of the carrier protein ThiS. In vitro, sulfur can be provided by H(2)S. The protein is Thiazole synthase of Nautilia profundicola (strain ATCC BAA-1463 / DSM 18972 / AmH).